Here is a 651-residue protein sequence, read N- to C-terminus: Endo-1,4-beta-xylanase A (651 aa).

An N-terminal signal peptide occupies residues 1 to 30 (MKRKVKKMAAMATSIIMAIMIILHSIPVLA). The GH11 domain occupies 33-227 (IIYDNETGTH…SSGYANVYKN (195 aa)). Catalysis depends on glutamate 124, which acts as the Nucleophile. Glutamate 214 acts as the Proton donor in catalysis. CBM6 domains follow at residues 250-370 (SIIE…FIFS), 387-507 (SIIQ…FVFT), and 527-647 (SNIQ…FVFS). Residues glutamate 253 and glutamate 255 each contribute to the Ca(2+) site. Threonine 270 is a binding site for D-xylotriose. Ca(2+) is bound at residue arginine 275. Repeat unit 1 spans residues 278 to 339 (GYIENGNTVT…SSTGSWNTYQ (62 aa)). The segment at 278-616 (GYIENGNTVT…GSTGSFDTYR (339 aa)) is 3 X 61 AA approximate repeats. 3 residues coordinate D-xylotriose: tyrosine 279, asparagine 336, and asparagine 363. Tyrosine 279, asparagine 336, and asparagine 363 together coordinate D-xylobiose. Position 365 (aspartate 365) interacts with Ca(2+). Copy 2 of the repeat occupies 415–476 (GYIENGYSTT…PSTNSWDSYQ (62 aa)). Residues glutamine 530, glutamate 532, and serine 552 each contribute to the Ca(2+) site. Repeat unit 3 spans residues 555 to 616 (GYIENGYSTT…GSTGSFDTYR (62 aa)). D-xylotriose-binding residues include tyrosine 556, aspartate 613, and asparagine 640. Residue aspartate 642 coordinates Ca(2+).

This sequence belongs to the glycosyl hydrolase 11 (cellulase G) family.

It is found in the secreted. The catalysed reaction is Endohydrolysis of (1-&gt;4)-beta-D-xylosidic linkages in xylans.. Its pathway is glycan degradation; xylan degradation. Endoxylanase that degrades arabinoxylan and glucuronoxylan to xylobiose and xylotriose (in vitro). The polypeptide is Endo-1,4-beta-xylanase A (xynA) (Thermoclostridium stercorarium (Clostridium stercorarium)).